The primary structure comprises 308 residues: Uricase (308 aa).

Residues lysine 5 and threonine 65 each act as charge relay system in the active site. The urate site is built by threonine 65, aspartate 66, phenylalanine 177, arginine 194, isoleucine 242, glutamine 243, and asparagine 269. The interval 283-308 is disordered; it reads ASVLREPPAPTGFQQFSMDRGDLDEQ.

The protein belongs to the uricase family.

It carries out the reaction urate + O2 + H2O = 5-hydroxyisourate + H2O2. The protein operates within purine metabolism; urate degradation; (S)-allantoin from urate: step 1/3. Functionally, catalyzes the oxidation of uric acid to 5-hydroxyisourate, which is further processed to form (S)-allantoin. In Haloferax volcanii (strain ATCC 29605 / DSM 3757 / JCM 8879 / NBRC 14742 / NCIMB 2012 / VKM B-1768 / DS2) (Halobacterium volcanii), this protein is Uricase.